The primary structure comprises 426 residues: Serine--tRNA ligase (426 aa).

Residue 229 to 231 (TAE) participates in L-serine binding. 260 to 262 (RSE) provides a ligand contact to ATP. E283 is an L-serine binding site. 347–350 (EIAS) contacts ATP. S383 contacts L-serine.

Belongs to the class-II aminoacyl-tRNA synthetase family. Type-1 seryl-tRNA synthetase subfamily. Homodimer. The tRNA molecule binds across the dimer.

The protein localises to the cytoplasm. The catalysed reaction is tRNA(Ser) + L-serine + ATP = L-seryl-tRNA(Ser) + AMP + diphosphate + H(+). It catalyses the reaction tRNA(Sec) + L-serine + ATP = L-seryl-tRNA(Sec) + AMP + diphosphate + H(+). It participates in aminoacyl-tRNA biosynthesis; selenocysteinyl-tRNA(Sec) biosynthesis; L-seryl-tRNA(Sec) from L-serine and tRNA(Sec): step 1/1. Functionally, catalyzes the attachment of serine to tRNA(Ser). Is also able to aminoacylate tRNA(Sec) with serine, to form the misacylated tRNA L-seryl-tRNA(Sec), which will be further converted into selenocysteinyl-tRNA(Sec). The polypeptide is Serine--tRNA ligase (Rickettsia bellii (strain RML369-C)).